The primary structure comprises 257 residues: Deoxyribose-phosphate aldolase (257 aa).

The Proton donor/acceptor role is filled by Asp-102. Residue Lys-166 is the Schiff-base intermediate with acetaldehyde of the active site. Lys-198 (proton donor/acceptor) is an active-site residue.

The protein belongs to the DeoC/FbaB aldolase family. DeoC type 2 subfamily.

The protein localises to the cytoplasm. It catalyses the reaction 2-deoxy-D-ribose 5-phosphate = D-glyceraldehyde 3-phosphate + acetaldehyde. Its pathway is carbohydrate degradation; 2-deoxy-D-ribose 1-phosphate degradation; D-glyceraldehyde 3-phosphate and acetaldehyde from 2-deoxy-alpha-D-ribose 1-phosphate: step 2/2. Functionally, catalyzes a reversible aldol reaction between acetaldehyde and D-glyceraldehyde 3-phosphate to generate 2-deoxy-D-ribose 5-phosphate. The protein is Deoxyribose-phosphate aldolase of Shewanella loihica (strain ATCC BAA-1088 / PV-4).